The primary structure comprises 117 residues: Prefoldin subunit beta (117 aa).

This sequence belongs to the prefoldin subunit beta family. As to quaternary structure, heterohexamer of two alpha and four beta subunits.

It is found in the cytoplasm. Its function is as follows. Molecular chaperone capable of stabilizing a range of proteins. Seems to fulfill an ATP-independent, HSP70-like function in archaeal de novo protein folding. This is Prefoldin subunit beta (pfdB) from Pyrococcus abyssi (strain GE5 / Orsay).